We begin with the raw amino-acid sequence, 361 residues long: Phospho-N-acetylmuramoyl-pentapeptide-transferase (361 aa).

The next 10 helical transmembrane spans lie at 28–48 (LAAL…IRSL), 73–93 (TMGG…WADL), 97–117 (YIWL…VDDY), 134–154 (FFWQ…TAEL), 168–188 (VAIP…IVGS), 200–220 (GLAI…AYVA), 237–257 (AGEL…FLWF), 264–284 (VFMG…ITVI), 289–309 (IVLV…MIQV), and 338–358 (QVVV…LSTL).

It belongs to the glycosyltransferase 4 family. MraY subfamily. Requires Mg(2+) as cofactor.

It localises to the cell inner membrane. The enzyme catalyses UDP-N-acetyl-alpha-D-muramoyl-L-alanyl-gamma-D-glutamyl-meso-2,6-diaminopimeloyl-D-alanyl-D-alanine + di-trans,octa-cis-undecaprenyl phosphate = di-trans,octa-cis-undecaprenyl diphospho-N-acetyl-alpha-D-muramoyl-L-alanyl-D-glutamyl-meso-2,6-diaminopimeloyl-D-alanyl-D-alanine + UMP. It functions in the pathway cell wall biogenesis; peptidoglycan biosynthesis. Catalyzes the initial step of the lipid cycle reactions in the biosynthesis of the cell wall peptidoglycan: transfers peptidoglycan precursor phospho-MurNAc-pentapeptide from UDP-MurNAc-pentapeptide onto the lipid carrier undecaprenyl phosphate, yielding undecaprenyl-pyrophosphoryl-MurNAc-pentapeptide, known as lipid I. This Nitrosomonas eutropha (strain DSM 101675 / C91 / Nm57) protein is Phospho-N-acetylmuramoyl-pentapeptide-transferase.